The primary structure comprises 210 residues: 7-methyl-GTP pyrophosphatase (210 aa).

The active-site Proton acceptor is the aspartate 79.

This sequence belongs to the Maf family. YceF subfamily. The cofactor is a divalent metal cation.

It localises to the cytoplasm. The catalysed reaction is N(7)-methyl-GTP + H2O = N(7)-methyl-GMP + diphosphate + H(+). In terms of biological role, nucleoside triphosphate pyrophosphatase that hydrolyzes 7-methyl-GTP (m(7)GTP). May have a dual role in cell division arrest and in preventing the incorporation of modified nucleotides into cellular nucleic acids. This Burkholderia orbicola (strain AU 1054) protein is 7-methyl-GTP pyrophosphatase.